Consider the following 265-residue polypeptide: Undecaprenyl-diphosphatase 1 (265 aa).

Helical transmembrane passes span 4 to 24, 42 to 62, 84 to 104, 108 to 128, 184 to 204, 217 to 237, and 245 to 265; these read IIIA…PISS, AKTF…ILYH, FHVF…HDVI, LFQP…MIFA, SEFS…LDLL, MFAV…VTFL, and LKPF…FVLL.

This sequence belongs to the UppP family.

The protein resides in the cell membrane. The catalysed reaction is di-trans,octa-cis-undecaprenyl diphosphate + H2O = di-trans,octa-cis-undecaprenyl phosphate + phosphate + H(+). In terms of biological role, catalyzes the dephosphorylation of undecaprenyl diphosphate (UPP). Confers resistance to bacitracin. The protein is Undecaprenyl-diphosphatase 1 of Bacillus thuringiensis (strain Al Hakam).